The chain runs to 341 residues: Retinol dehydrogenase 10 (341 aa).

The helical; Signal-anchor transmembrane segment at 3–23 (IVVEFFVVTFKVLWAFVLAAA) threads the bilayer. 40 to 64 (LITGAGSGLGRLFALEFARRRALLV) provides a ligand contact to NADP(+). S197 lines the substrate pocket. Y210 (proton acceptor) is an active-site residue.

Belongs to the short-chain dehydrogenases/reductases (SDR) family. Detected in retinal pigment epithelium (at protein level). Detected in retina, retinal pigment epithelium, and at lower levels in cornea, liver, kidney, pancreas, lung, brain and skeletal muscle.

The protein resides in the microsome membrane. It localises to the endoplasmic reticulum membrane. The catalysed reaction is all-trans-retinol + NADP(+) = all-trans-retinal + NADPH + H(+). It functions in the pathway cofactor metabolism; retinol metabolism. Its function is as follows. Retinol dehydrogenase with a clear preference for NADP. Converts all-trans-retinol to all-trans-retinal. Has no detectable activity towards 11-cis-retinol, 9-cis-retinol and 13-cis-retinol. This Bos taurus (Bovine) protein is Retinol dehydrogenase 10 (RDH10).